Consider the following 349-residue polypeptide: uncharacterized protein (349 aa).

Polar residues predominate over residues 116–135; the sequence is HFSQTNPKSTPEPPCTSSSG. The tract at residues 116–148 is disordered; that stretch reads HFSQTNPKSTPEPPCTSSSGAGDCHENLPADGY.

This is an uncharacterized protein from Caenorhabditis elegans.